Reading from the N-terminus, the 295-residue chain is Aspartate carbamoyltransferase catalytic subunit (295 aa).

2 residues coordinate carbamoyl phosphate: Arg49 and Thr50. Lys77 is an L-aspartate binding site. Arg99, His127, and Gln130 together coordinate carbamoyl phosphate. L-aspartate is bound by residues Arg161 and Arg212. Carbamoyl phosphate is bound by residues Gly251 and Pro252.

This sequence belongs to the aspartate/ornithine carbamoyltransferase superfamily. ATCase family. In terms of assembly, heterododecamer (2C3:3R2) of six catalytic PyrB chains organized as two trimers (C3), and six regulatory PyrI chains organized as three dimers (R2).

It carries out the reaction carbamoyl phosphate + L-aspartate = N-carbamoyl-L-aspartate + phosphate + H(+). It participates in pyrimidine metabolism; UMP biosynthesis via de novo pathway; (S)-dihydroorotate from bicarbonate: step 2/3. Catalyzes the condensation of carbamoyl phosphate and aspartate to form carbamoyl aspartate and inorganic phosphate, the committed step in the de novo pyrimidine nucleotide biosynthesis pathway. This is Aspartate carbamoyltransferase catalytic subunit from Campylobacter jejuni subsp. jejuni serotype O:23/36 (strain 81-176).